Reading from the N-terminus, the 130-residue chain is Small ribosomal subunit protein uS8 (130 aa).

The protein belongs to the universal ribosomal protein uS8 family. As to quaternary structure, part of the 30S ribosomal subunit. Contacts proteins S5 and S12.

In terms of biological role, one of the primary rRNA binding proteins, it binds directly to 16S rRNA central domain where it helps coordinate assembly of the platform of the 30S subunit. This is Small ribosomal subunit protein uS8 from Coxiella burnetii (strain Dugway 5J108-111).